Reading from the N-terminus, the 151-residue chain is UPF0208 membrane protein YfbV (151 aa).

Helical transmembrane passes span 46–65 and 69–91; these read FGIRFMPPLAIFTLTWQIAL and LGPAVATALFACSLPMQGLWWLG.

This sequence belongs to the UPF0208 family.

It localises to the cell inner membrane. The chain is UPF0208 membrane protein YfbV (yfbV) from Photorhabdus temperata.